Reading from the N-terminus, the 188-residue chain is Ribosome maturation factor RimM (188 aa).

A PRC barrel domain is found at E98–V171.

This sequence belongs to the RimM family. In terms of assembly, binds ribosomal protein uS19.

The protein localises to the cytoplasm. Its function is as follows. An accessory protein needed during the final step in the assembly of 30S ribosomal subunit, possibly for assembly of the head region. Essential for efficient processing of 16S rRNA. May be needed both before and after RbfA during the maturation of 16S rRNA. It has affinity for free ribosomal 30S subunits but not for 70S ribosomes. The chain is Ribosome maturation factor RimM from Myxococcus xanthus (strain DK1622).